Reading from the N-terminus, the 157-residue chain is Transcriptional regulator MraZ (157 aa).

SpoVT-AbrB domains follow at residues 7 to 54 (TYTM…GTSL) and 83 to 126 (TEML…EPER).

Belongs to the MraZ family. As to quaternary structure, forms oligomers.

The protein localises to the cytoplasm. It is found in the nucleoid. The sequence is that of Transcriptional regulator MraZ from Azorhizobium caulinodans (strain ATCC 43989 / DSM 5975 / JCM 20966 / LMG 6465 / NBRC 14845 / NCIMB 13405 / ORS 571).